The sequence spans 448 residues: Methionine aminopeptidase 2 (448 aa).

Positions 1 to 47 (MTSSVDKVSQKVADVKLGSSKSTKNNKSKGKGKSNKNQVVEDDDEDD) are disordered. The span at 24-34 (KNNKSKGKGKS) shows a compositional bias: basic residues. His198 serves as a coordination point for substrate. Residues Asp218, Asp229, and His298 each contribute to the a divalent metal cation site. Residue His306 coordinates substrate. The a divalent metal cation site is built by Glu331 and Glu429.

It belongs to the peptidase M24A family. Methionine aminopeptidase eukaryotic type 2 subfamily. The cofactor is Co(2+). Zn(2+) is required as a cofactor. Mn(2+) serves as cofactor. It depends on Fe(2+) as a cofactor.

It localises to the cytoplasm. It catalyses the reaction Release of N-terminal amino acids, preferentially methionine, from peptides and arylamides.. In terms of biological role, cotranslationally removes the N-terminal methionine from nascent proteins. The N-terminal methionine is often cleaved when the second residue in the primary sequence is small and uncharged (Met-Ala-, Cys, Gly, Pro, Ser, Thr, or Val). The chain is Methionine aminopeptidase 2 from Komagataella phaffii (strain GS115 / ATCC 20864) (Yeast).